The chain runs to 63 residues: Large ribosomal subunit protein uL29 (63 aa).

Belongs to the universal ribosomal protein uL29 family.

The protein is Large ribosomal subunit protein uL29 of Marinomonas sp. (strain MWYL1).